The sequence spans 183 residues: Pectinesterase inhibitor 8 (183 aa).

The N-terminal stretch at 1 to 30 (MAQRASRRPAAAAAAVVVAVVLAVSGGVGA) is a signal peptide. Disulfide bonds link C36–C51 and C107–C147.

This sequence belongs to the PMEI family.

It is found in the secreted. It localises to the extracellular space. Its subcellular location is the apoplast. Its function is as follows. Pectin methylesterase (PME) inhibitor that inhibits PME in vitro. The sequence is that of Pectinesterase inhibitor 8 from Oryza sativa subsp. japonica (Rice).